The following is a 90-amino-acid chain: Putative transcript Y 12 protein (90 aa).

The protein is Putative transcript Y 12 protein (TTTY12) of Homo sapiens (Human).